The primary structure comprises 351 residues: DNA-directed RNA polymerase subunit alpha (351 aa).

An alpha N-terminal domain (alpha-NTD) region spans residues 1 to 236; sequence MSVNTKNWQE…DQLTLFVHFE (236 aa). The alpha C-terminal domain (alpha-CTD) stretch occupies residues 256–351; it reads DDANQLNRYL…AKKLEQELLG (96 aa).

This sequence belongs to the RNA polymerase alpha chain family. In terms of assembly, homodimer. The RNAP catalytic core consists of 2 alpha, 1 beta, 1 beta' and 1 omega subunit. When a sigma factor is associated with the core the holoenzyme is formed, which can initiate transcription.

It carries out the reaction RNA(n) + a ribonucleoside 5'-triphosphate = RNA(n+1) + diphosphate. DNA-dependent RNA polymerase catalyzes the transcription of DNA into RNA using the four ribonucleoside triphosphates as substrates. The chain is DNA-directed RNA polymerase subunit alpha from Erythrobacter litoralis (strain HTCC2594).